The primary structure comprises 168 residues: Large ribosomal subunit protein bL17 (168 aa).

Basic and acidic residues predominate over residues 121 to 146 (AEAEGGEEKAEQKTEKKAAKAKEPKA). Residues 121–168 (AEAEGGEEKAEQKTEKKAAKAKEPKAAKAPKKAAAKPKAKAEKKGAEE) form a disordered region. The span at 148-158 (KAPKKAAAKPK) shows a compositional bias: basic residues. Residues 159-168 (AKAEKKGAEE) are compositionally biased toward basic and acidic residues.

The protein belongs to the bacterial ribosomal protein bL17 family. Part of the 50S ribosomal subunit. Contacts protein L32.

The chain is Large ribosomal subunit protein bL17 from Anaeromyxobacter sp. (strain Fw109-5).